Here is a 340-residue protein sequence, read N- to C-terminus: S-adenosylmethionine:tRNA ribosyltransferase-isomerase (340 aa).

The protein belongs to the QueA family. Monomer.

The protein resides in the cytoplasm. It catalyses the reaction 7-aminomethyl-7-carbaguanosine(34) in tRNA + S-adenosyl-L-methionine = epoxyqueuosine(34) in tRNA + adenine + L-methionine + 2 H(+). It participates in tRNA modification; tRNA-queuosine biosynthesis. In terms of biological role, transfers and isomerizes the ribose moiety from AdoMet to the 7-aminomethyl group of 7-deazaguanine (preQ1-tRNA) to give epoxyqueuosine (oQ-tRNA). This Francisella tularensis subsp. holarctica (strain OSU18) protein is S-adenosylmethionine:tRNA ribosyltransferase-isomerase.